The sequence spans 303 residues: Protease HtpX (303 aa).

2 helical membrane passes run 4 to 24 and 42 to 62; these read IGLF…VFGI and IASL…ISLF. H149 is a binding site for Zn(2+). E150 is an active-site residue. Residue H153 participates in Zn(2+) binding. 2 consecutive transmembrane segments (helical) span residues 157 to 177 and 200 to 220; these read GDMV…MFFA and FVTS…IVMW. Zn(2+) is bound at residue E226.

The protein belongs to the peptidase M48B family. Zn(2+) is required as a cofactor.

The protein resides in the cell inner membrane. This Psychrobacter sp. (strain PRwf-1) protein is Protease HtpX.